The following is a 682-amino-acid chain: Potassium-transporting ATPase ATP-binding subunit (682 aa).

4 consecutive transmembrane segments (helical) span residues proline 34 to valine 54, isoleucine 58 to phenylalanine 78, isoleucine 219 to leucine 239, and valine 254 to isoleucine 274. Residue aspartate 307 is the 4-aspartylphosphate intermediate of the active site. ATP-binding positions include aspartate 344, glutamate 348, phenylalanine 377–serine 384, and lysine 395. Residues aspartate 518 and aspartate 522 each coordinate Mg(2+). Helical transmembrane passes span phenylalanine 588–methionine 608, alanine 616–leucine 636, and leucine 662–alanine 682.

Belongs to the cation transport ATPase (P-type) (TC 3.A.3) family. Type IA subfamily. In terms of assembly, the system is composed of three essential subunits: KdpA, KdpB and KdpC.

It localises to the cell inner membrane. It catalyses the reaction K(+)(out) + ATP + H2O = K(+)(in) + ADP + phosphate + H(+). Functionally, part of the high-affinity ATP-driven potassium transport (or Kdp) system, which catalyzes the hydrolysis of ATP coupled with the electrogenic transport of potassium into the cytoplasm. This subunit is responsible for energy coupling to the transport system and for the release of the potassium ions to the cytoplasm. The polypeptide is Potassium-transporting ATPase ATP-binding subunit (Salmonella enteritidis PT4 (strain P125109)).